The primary structure comprises 268 residues: MDRYQALFAQLEKKNQGAFVPFVTIGDPNPELSYNIMETLIEAGADALELGIPFSDPLADGPTIQGANIRALDSKTTPAICFELIAKIRSKYPETPIGLLVYANLVFANGIDDFYAKCQQAGVDSVLIADVPTNESQEFRESAIEHGIHPIFIAPPSASPETLETVAKLGGGYTYLLSRAGVTGAETKAGMPVAQLLERLNQYDAPPAILGFGISEPAQVEEAVKAGAAGAISGSATVKLIEQHQANPEALLKALTDFTSSMKAATQK.

Active-site proton acceptor residues include Glu-49 and Asp-60.

The protein belongs to the TrpA family. Tetramer of two alpha and two beta chains.

It catalyses the reaction (1S,2R)-1-C-(indol-3-yl)glycerol 3-phosphate + L-serine = D-glyceraldehyde 3-phosphate + L-tryptophan + H2O. It participates in amino-acid biosynthesis; L-tryptophan biosynthesis; L-tryptophan from chorismate: step 5/5. Its function is as follows. The alpha subunit is responsible for the aldol cleavage of indoleglycerol phosphate to indole and glyceraldehyde 3-phosphate. This is Tryptophan synthase alpha chain from Aliivibrio fischeri (strain MJ11) (Vibrio fischeri).